Here is a 41-residue protein sequence, read N- to C-terminus: KYYGNGVHXGKHSXTVDWGTAIGNIGNNAAANXATGXNAGG.

The protein belongs to the bacteriocin class IIA/YGNGV family.

Its subcellular location is the secreted. Its function is as follows. This heat stable bacteriocin shows activity against species of Lactobacillus, Listeria monocytogenes, Pediococcus, Enterococcus, Leuconostoc and Lactococcus. The sequence is that of Bacteriocin bavaricin-A from Latilactobacillus sakei (Lactobacillus sakei).